The sequence spans 313 residues: 4-diphosphocytidyl-2-C-methyl-D-erythritol kinase (313 aa).

The active site involves Lys10. ATP is bound at residue 95–105 (PVTAGLGGGSS). Asp136 is an active-site residue. A disordered region spans residues 289-313 (HPRVSPWRSPRSASSPSTRRSSRPT). Low complexity predominate over residues 292–307 (VSPWRSPRSASSPSTR).

It belongs to the GHMP kinase family. IspE subfamily.

The enzyme catalyses 4-CDP-2-C-methyl-D-erythritol + ATP = 4-CDP-2-C-methyl-D-erythritol 2-phosphate + ADP + H(+). It functions in the pathway isoprenoid biosynthesis; isopentenyl diphosphate biosynthesis via DXP pathway; isopentenyl diphosphate from 1-deoxy-D-xylulose 5-phosphate: step 3/6. In terms of biological role, catalyzes the phosphorylation of the position 2 hydroxy group of 4-diphosphocytidyl-2C-methyl-D-erythritol. This Anaeromyxobacter dehalogenans (strain 2CP-C) protein is 4-diphosphocytidyl-2-C-methyl-D-erythritol kinase.